The primary structure comprises 410 residues: Dipeptidase 1 (410 aa).

Positions Met1–Ala16 are cleaved as a signal peptide. Zn(2+) is bound by residues His36 and Asp38. N-linked (GlcNAc...) asparagine glycans are attached at residues Asn57 and Asn62. Residues Cys87 and Cys170 are joined by a disulfide bond. Zn(2+) is bound at residue Glu141. A substrate-binding site is contributed by His168. Zn(2+) contacts are provided by His214 and His235. Cys242 and Cys274 are oxidised to a cystine. Residue Arg246 participates in substrate binding. Asn279 carries an N-linked (GlcNAc...) asparagine glycan. Asp304 serves as a coordination point for substrate. The GPI-anchor amidated serine moiety is linked to residue Ser384. Residues Gly385–Leu410 constitute a propeptide, removed in mature form.

The protein belongs to the metallo-dependent hydrolases superfamily. Peptidase M19 family. As to quaternary structure, homodimer; disulfide-linked. The cofactor is Zn(2+).

It localises to the apical cell membrane. It catalyses the reaction an L-aminoacyl-L-amino acid + H2O = 2 an L-alpha-amino acid. The catalysed reaction is leukotriene D4 + H2O = leukotriene E4 + glycine. The enzyme catalyses L-cystine-bis-glycine + 2 H2O = L-cystine + 2 glycine. It carries out the reaction a beta-lactam + H2O = a substituted beta-amino acid. It catalyses the reaction glycyldehydrophenylalanine + H2O = 2,3-didehydrophenylalanine + glycine. Its activity is regulated as follows. Inhibited by L-penicillamine. Inhibited by cilastatin. Functionally, hydrolyzes a wide range of dipeptides including the conversion of leukotriene D4 to leukotriene E4. Hydrolyzes cystinyl-bis-glycine (cys-bis-gly) formed during glutathione degradation. Also possesses beta lactamase activity and hydrolytically inactivates beta-lactam antibiotics. Its function is as follows. Independently of its dipeptidase activity, acts as an adhesion receptor for neutrophil recruitment from bloodstream into inflamed lungs and liver. The sequence is that of Dipeptidase 1 (DPEP1) from Bos taurus (Bovine).